The sequence spans 490 residues: Betaine aldehyde dehydrogenase (490 aa).

Residues Thr-26, Ile-27, and Asp-93 each coordinate K(+). Position 150–152 (150–152 (GAW)) interacts with NAD(+). The active-site Charge relay system is the Lys-162. 176–179 (KPSE) serves as a coordination point for NAD(+). Val-180 is a binding site for K(+). Residue 230-233 (GTST) coordinates NAD(+). Position 246 (Leu-246) interacts with K(+). The active-site Proton acceptor is the Glu-252. NAD(+) contacts are provided by Gly-254, Cys-286, and Glu-387. Cys-286 serves as the catalytic Nucleophile. A Cysteine sulfenic acid (-SOH) modification is found at Cys-286. Positions 457 and 460 each coordinate K(+). Glu-464 serves as the catalytic Charge relay system.

Belongs to the aldehyde dehydrogenase family. Dimer of dimers. It depends on K(+) as a cofactor.

The enzyme catalyses betaine aldehyde + NAD(+) + H2O = glycine betaine + NADH + 2 H(+). The protein operates within amine and polyamine biosynthesis; betaine biosynthesis via choline pathway; betaine from betaine aldehyde: step 1/1. In terms of biological role, involved in the biosynthesis of the osmoprotectant glycine betaine. Catalyzes the irreversible oxidation of betaine aldehyde to the corresponding acid. The protein is Betaine aldehyde dehydrogenase of Pseudomonas paraeruginosa (strain DSM 24068 / PA7) (Pseudomonas aeruginosa (strain PA7)).